A 376-amino-acid polypeptide reads, in one-letter code: Ribonucleoside-diphosphate reductase 1 subunit beta (376 aa).

3 residues coordinate Fe cation: Asp85, Glu116, and His119. Tyr123 is a catalytic residue. The Fe cation site is built by Glu205, Glu239, and His242.

Belongs to the ribonucleoside diphosphate reductase small chain family. As to quaternary structure, tetramer of two alpha (R1) and two beta (R2) subunits. The B1 protein is a dimer of alpha subunits. A radical transfer pathway occurs between Tyr-123 of R2 and R1. Requires Fe cation as cofactor.

The enzyme catalyses a 2'-deoxyribonucleoside 5'-diphosphate + [thioredoxin]-disulfide + H2O = a ribonucleoside 5'-diphosphate + [thioredoxin]-dithiol. Its function is as follows. Provides the precursors necessary for DNA synthesis. Catalyzes the biosynthesis of deoxyribonucleotides from the corresponding ribonucleotides. R2 contains the tyrosyl radical required for catalysis. This Escherichia coli O157:H7 protein is Ribonucleoside-diphosphate reductase 1 subunit beta (nrdB).